The chain runs to 273 residues: DNA repair protein RecO (273 aa).

The protein belongs to the RecO family.

Functionally, involved in DNA repair and RecF pathway recombination. The polypeptide is DNA repair protein RecO (Saccharopolyspora erythraea (strain ATCC 11635 / DSM 40517 / JCM 4748 / NBRC 13426 / NCIMB 8594 / NRRL 2338)).